Reading from the N-terminus, the 255-residue chain is Pyrroloquinoline-quinone synthase (255 aa).

It belongs to the PqqC family.

It catalyses the reaction 6-(2-amino-2-carboxyethyl)-7,8-dioxo-1,2,3,4,7,8-hexahydroquinoline-2,4-dicarboxylate + 3 O2 = pyrroloquinoline quinone + 2 H2O2 + 2 H2O + H(+). The protein operates within cofactor biosynthesis; pyrroloquinoline quinone biosynthesis. Ring cyclization and eight-electron oxidation of 3a-(2-amino-2-carboxyethyl)-4,5-dioxo-4,5,6,7,8,9-hexahydroquinoline-7,9-dicarboxylic-acid to PQQ. This chain is Pyrroloquinoline-quinone synthase, found in Cereibacter sphaeroides (strain ATCC 17023 / DSM 158 / JCM 6121 / CCUG 31486 / LMG 2827 / NBRC 12203 / NCIMB 8253 / ATH 2.4.1.) (Rhodobacter sphaeroides).